A 361-amino-acid polypeptide reads, in one-letter code: DNA replication and repair protein RecF (361 aa).

30–37 contacts ATP; the sequence is GPNGSGKT.

This sequence belongs to the RecF family.

It localises to the cytoplasm. The RecF protein is involved in DNA metabolism; it is required for DNA replication and normal SOS inducibility. RecF binds preferentially to single-stranded, linear DNA. It also seems to bind ATP. This Yersinia pseudotuberculosis serotype O:1b (strain IP 31758) protein is DNA replication and repair protein RecF.